A 2219-amino-acid chain; its full sequence is E3 ubiquitin-protein ligase Ubr3 (2219 aa).

Disordered stretches follow at residues 1–48 and 78–134; these read MDED…DLSS and AAGA…SALS. Basic and acidic residues predominate over residues 20 to 29; it reads VREQTHHPPM. The segment covering 31-42 has biased composition (acidic residues); that stretch reads EDQELDNEDGSS. A compositionally biased stretch (low complexity) spans 114–134; sequence GPTTTTSSGTAAESGAASALS. The segment at 222 to 293 adopts a UBR-type zinc-finger fold; the sequence is AKCGLVWVPH…AEGFCSDHGI (72 aa). Disordered stretches follow at residues 1348-1367 and 1440-1464; these read SFSLSDGEDQSSDDDSTMDV and QREKQAEAKAREAKEKEERRKKARE. A compositionally biased stretch (acidic residues) spans 1353 to 1367; sequence DGEDQSSDDDSTMDV. Residues 1607-1643 form an RING-type; degenerate zinc finger; the sequence is CGHHVHLSCLEAYLKTLYTTQRQPVQDRGEFYCPVCR. Disordered regions lie at residues 1872–1902 and 1935–1954; these read VGSDNSAAESQQQESAAGTTNNRRRAGQQQQ and SAAASAAGSSSTTSTNHGAS. The span at 1877–1888 shows a compositional bias: low complexity; it reads SAAESQQQESAA.

The protein belongs to the E3 ubiquitin-protein ligase UBR1-like family. Selectively interacts (via UBR-type zinc finger) with the cleaved form of Diap1; this interaction is enhanced by tal. Interacts with tal and Rrp1. Interacts with ovo isoform B (via N-terminus). Interacts with Cad99C (via the cytoplasmic domain). Interacts with ck and Sans. Interacts with cos (via Kinesin motor domain). Post-translationally, in vitro, self-ubiquitination in the presence of E1, E2 and ubiquitin.

Its subcellular location is the cytoplasm. It is found in the nucleus. The catalysed reaction is S-ubiquitinyl-[E2 ubiquitin-conjugating enzyme]-L-cysteine + [acceptor protein]-L-lysine = [E2 ubiquitin-conjugating enzyme]-L-cysteine + N(6)-ubiquitinyl-[acceptor protein]-L-lysine.. It functions in the pathway protein modification; protein ubiquitination. In terms of biological role, E3 ubiquitin-protein ligase which is a component of the N-end rule pathway. Recognizes and binds to proteins bearing specific N-terminal residues, leading to their ubiquitination and subsequent degradation. Binds to the E3 ubiquitin-protein ligase Diap1 and enhances its ubiquitination and anti-apoptotic functions. Essential during trichome development for the ubiquitination of the N-terminus of ovo isoform B (svb), converting it from a transcriptional inhibitor to an activator. Positively regulates a hh-signaling pathway which functions in photoreceptor differentiation. Activation of hh up-regulates transcription of Ubr3, which in turn promotes hh signaling by mediating the ubiquitination and degradation of cos. Necessary for auditory transduction: plays a role in Johnston's organ organization by acting in the regulation of zip and ck function in scolopidial apical attachment. Likely to function by acting in a pathway that negatively regulates the ubiquitination of zip, consequently affecting its interaction with ck. May also negatively regulate a component of the SCF (SKP1-CUL1-F-box protein) E3 ubiquitin-protein ligase complex Cul1, which also appears to function in the negative regulation of the zip-ck interaction and scolopidial apical attachment. This chain is E3 ubiquitin-protein ligase Ubr3, found in Drosophila melanogaster (Fruit fly).